We begin with the raw amino-acid sequence, 412 residues long: Palmitoyltransferase ZDHHC11 (412 aa).

Residues 1 to 42 (MDTRSGSQCSVTPEAILNNEKLVLPPRISRVNGWSLPLHYFQ) are Cytoplasmic-facing. The chain crosses the membrane as a helical span at residues 43-63 (VVTWAVFVGLSSATFGIFIPF). The Lumenal portion of the chain corresponds to 64–69 (LPHAWK). The chain crosses the membrane as a helical span at residues 70–90 (YIAYVVTGGIFSFHLVVHLIA). Residues 91 to 176 (SCIDPADSNV…YWFFFSTVAS (86 aa)) lie on the Cytoplasmic side of the membrane. The DHHC domain maps to 125–175 (QFCHLCKVTVNKKTKHCISCNKCVSGFDHHCKWINNCVGSRNYWFFFSTVA). Cys-155 acts as the S-palmitoyl cysteine intermediate in catalysis. A helical transmembrane segment spans residues 177-197 (ATAGMLCLIAILLYVLVQYLV). At 198-230 (NPGVLRTDPRYEDVKNMNTWLLFLPLFPVQVQT) the chain is on the lumenal side. The mediates interaction with IRF3 and STING1 stretch occupies residues 198 to 412 (NPGVLRTDPR…MKTDSAESED (215 aa)). The helical transmembrane segment at 231 to 251 (LIVVIIGMLVLLLDFLGLVHL) threads the bilayer. The Cytoplasmic portion of the chain corresponds to 252-412 (GQLLIFHIYL…MKTDSAESED (161 aa)). Residues 374–412 (HPDGGSMAQEADDAPSISTLGLQQETTEPMKTDSAESED) are disordered. Residues 389–400 (SISTLGLQQETT) show a composition bias toward polar residues. Positions 401–412 (EPMKTDSAESED) are enriched in basic and acidic residues.

The protein belongs to the DHHC palmitoyltransferase family. In terms of assembly, interacts with IRF3 and STING1; in presence of DNA viruses recruits IRF3 to STING1 promoting IRF3 phosphorylation and activation. As to expression, expressed in testis.

Its subcellular location is the endoplasmic reticulum membrane. The catalysed reaction is L-cysteinyl-[protein] + hexadecanoyl-CoA = S-hexadecanoyl-L-cysteinyl-[protein] + CoA. Its function is as follows. Endoplasmic reticulum-localized palmitoyltransferase that could catalyze the addition of palmitate onto various protein substrates and be involved in a variety of cellular processes. Has a palmitoyltransferase activity toward NCDN and regulates NCDN association with endosome membranes through this palmitoylation. May play a role in cell proliferation. In terms of biological role, also has a palmitoyltransferase activity-independent function in DNA virus-triggered and CGAS-mediated innate immune response. Functions as an adapter that recruits IRF3 to STING1 to promote the activation of that key transcriptional regulator of type I interferon (IFN)-dependent immune response. The protein is Palmitoyltransferase ZDHHC11 of Homo sapiens (Human).